We begin with the raw amino-acid sequence, 238 residues long: MVIKAQSPAGFAEEYIIESIWNSRFPPGSILPAERELSELIGVTRTTLREVLQRLARDGWLTIQHGKPTKVNNFWETSGLSILETLARLDHDSVPQLIDNLLSVRTNISSIFIRRAIRTYPDKAREVLETANEVEDQAEAYTRLDYSIFRGLAFASGNPIYGLILNGLKGLYTRVGRHYFSNPEARRLAQGFYQQLLNILHTKQYELIVDSVRDYGRRSGEIWHGMQVSMPTELLPAR.

The region spanning 6 to 74 (QSPAGFAEEY…HGKPTKVNNF (69 aa)) is the HTH gntR-type domain. The H-T-H motif DNA-binding region spans 34–53 (ERELSELIGVTRTTLREVLQ).

Homodimer.

The protein localises to the cytoplasm. In terms of biological role, multifunctional regulator of fatty acid metabolism. In Erwinia tasmaniensis (strain DSM 17950 / CFBP 7177 / CIP 109463 / NCPPB 4357 / Et1/99), this protein is Fatty acid metabolism regulator protein.